A 170-amino-acid polypeptide reads, in one-letter code: MALLEVLTFPDDRLRTVAKPVEAVTPEIQKFVDDMIETMYDEEGIGLAATQVDFHQRIVVIDVSETRDEPMVLINPVITQKSGDDGIEEGCLSVPGAKGLVPRSAEVSVSALDRDGNEFSFDADDLLAICVQHELDHLDGKLFVDYLSPLKRKRIKEKLEKIKKFNAKNQ.

Fe cation-binding residues include cysteine 91 and histidine 133. Glutamate 134 is a catalytic residue. Histidine 137 provides a ligand contact to Fe cation.

Belongs to the polypeptide deformylase family. Fe(2+) serves as cofactor.

The catalysed reaction is N-terminal N-formyl-L-methionyl-[peptide] + H2O = N-terminal L-methionyl-[peptide] + formate. Removes the formyl group from the N-terminal Met of newly synthesized proteins. Requires at least a dipeptide for an efficient rate of reaction. N-terminal L-methionine is a prerequisite for activity but the enzyme has broad specificity at other positions. The protein is Peptide deformylase of Aliivibrio fischeri (strain ATCC 700601 / ES114) (Vibrio fischeri).